A 195-amino-acid chain; its full sequence is Putative inactive carbonic anhydrase 5B-like protein (195 aa).

A substrate-binding site is contributed by T121–T122.

The protein belongs to the alpha-carbonic anhydrase family.

In Homo sapiens (Human), this protein is Putative inactive carbonic anhydrase 5B-like protein (CA5BP1).